The chain runs to 361 residues: Histidinol-phosphate aminotransferase (361 aa).

Residue Lys221 is modified to N6-(pyridoxal phosphate)lysine.

The protein belongs to the class-II pyridoxal-phosphate-dependent aminotransferase family. Histidinol-phosphate aminotransferase subfamily. It depends on pyridoxal 5'-phosphate as a cofactor.

It catalyses the reaction L-histidinol phosphate + 2-oxoglutarate = 3-(imidazol-4-yl)-2-oxopropyl phosphate + L-glutamate. The protein operates within amino-acid biosynthesis; L-histidine biosynthesis; L-histidine from 5-phospho-alpha-D-ribose 1-diphosphate: step 7/9. The chain is Histidinol-phosphate aminotransferase from Methanocella arvoryzae (strain DSM 22066 / NBRC 105507 / MRE50).